Here is a 182-residue protein sequence, read N- to C-terminus: Cytidylate kinase (182 aa).

7-15 is a binding site for ATP; sequence GLPGSGTTS.

Belongs to the cytidylate kinase family. Type 2 subfamily.

The protein resides in the cytoplasm. The catalysed reaction is CMP + ATP = CDP + ADP. It catalyses the reaction dCMP + ATP = dCDP + ADP. In Methanoregula boonei (strain DSM 21154 / JCM 14090 / 6A8), this protein is Cytidylate kinase.